Reading from the N-terminus, the 638-residue chain is Polypeptide N-acetylgalactosaminyltransferase 15 (638 aa).

Topologically, residues 1–12 (MLPRKRPRSGRS) are cytoplasmic. Residues 13-35 (RLQFLLLFLTLGCVLMMVILLHP) traverse the membrane as a helical; Signal-anchor for type II membrane protein segment. Over 36-638 (PPPTLHQAVT…FDQIHPVDER (603 aa)) the chain is Lumenal. The interval 134 to 157 (KDWRTEEDGEESEEVLTPLGPDSD) is disordered. Cystine bridges form between Cys-181–Cys-411, Cys-402–Cys-481, Cys-516–Cys-535, Cys-561–Cys-574, and Cys-602–Cys-619. The segment at 190 to 299 (LPTASVILCF…PGWLEPLLSR (110 aa)) is catalytic subdomain A. Residues Asp-231 and Arg-260 each coordinate substrate. Residues Asp-283, His-285, and His-416 each coordinate Mn(2+). Residues 357-419 (PVRSPVVPRE…PCSRVGHIYR (63 aa)) form a catalytic subdomain B region. Residue Arg-419 coordinates substrate. The region spanning 503–630 (RFSGKLHNTG…GKTSQLWRFD (128 aa)) is the Ricin B-type lectin domain. Asn-573 is a glycosylation site (N-linked (GlcNAc...) asparagine).

The protein belongs to the glycosyltransferase 2 family. GalNAc-T subfamily. Requires Mn(2+) as cofactor. Specifically expressed in testis.

Its subcellular location is the golgi apparatus membrane. It catalyses the reaction L-seryl-[protein] + UDP-N-acetyl-alpha-D-galactosamine = a 3-O-[N-acetyl-alpha-D-galactosaminyl]-L-seryl-[protein] + UDP + H(+). The enzyme catalyses L-threonyl-[protein] + UDP-N-acetyl-alpha-D-galactosamine = a 3-O-[N-acetyl-alpha-D-galactosaminyl]-L-threonyl-[protein] + UDP + H(+). It functions in the pathway protein modification; protein glycosylation. Catalyzes the initial reaction in O-linked oligosaccharide biosynthesis, the transfer of an N-acetyl-D-galactosamine residue to a serine or threonine residue on the protein receptor. Although it displays a much weaker activity toward all substrates tested compared to GALNT2, it is able to transfer up to seven GalNAc residues to the Muc5AC peptide, suggesting that it can fill vicinal Thr/Ser residues in cooperation with other GALNT proteins. Prefers Muc1a as substrate. This is Polypeptide N-acetylgalactosaminyltransferase 15 (Galnt15) from Mus musculus (Mouse).